The primary structure comprises 54 residues: Ovomucoid (54 aa).

One can recognise a Kazal-like domain in the interval 4 to 54 (VDCSDYPKPACTVEYMPLCGSDNKTYDNKCNFCNAVVDSNGTLTLSHFGKC). 3 disulfides stabilise this stretch: Cys6/Cys36, Cys14/Cys33, and Cys22/Cys54. N-linked (GlcNAc...) asparagine glycosylation occurs at Asn43.

The protein localises to the secreted. The sequence is that of Ovomucoid from Anser anser anser (Western greylag goose).